The chain runs to 688 residues: MTERNGGFPGDYCFEAPGGDYDEGSDSPRVSEGSNCSKRKVGETFGVSKMVLPLSGLSSSDRKELIRRLRQELEQIRVFQKNFELSRTVALTSSSASGLTRVKSFGMSRCSTGPGKTVNPISAASKPTPVTTAVMLLMKQCEALLKRLMSHQYGWVFNTPVDVVKLNILDYFNVIEHPMDLGTVKNKLTSGTYSCPSEFAADVRLTFSNAMTYNPPGNDVYVMADTLRKFFEVRWKTLEKKLSGTKVHTEPSNLDAHKEKHIVIPVPMAKKRKTTAVDCENVVDPAKRVMTDEDRLKLGKDLESLTEFPAQLINFLRDHNSNEGGIGDDEIEIDINDLSDHALFQLRDLLDEHLREIQNKKSSVEPCEIELLHGSVPGNSSMQHCDGSELDDEVVDIGENEHPTSSISPVTIEKDLVLGNSNGNSLGSVSGDPKMSSLPRASKGLGTIDLEPMLDGATSASPTRGSSVGGLDQLESASPEKISSVEADCQQDGNSAQNEKQLPPEKSYRAAILKNRFADIILKAREKPLNQNDTRDPEKLQREREELELQKKKEKARLQAEAKAAEEARRKAEAQAAAEAAAEAKRKLELEREAARQALMEMEQSVELNENAKFLEDLELLKTVDTDHLTNTIEEEDGPDVGLRSFSFGGSNPLEQLGLFMKQDEDEEEADPLTSPAPEIDIEEGEID.

Residues 1–36 are disordered; sequence MTERNGGFPGDYCFEAPGGDYDEGSDSPRVSEGSNC. Positions 132–238 constitute a Bromo domain; the sequence is TAVMLLMKQC…KFFEVRWKTL (107 aa). The region spanning 280–361 is the NET domain; the sequence is ENVVDPAKRV…EHLREIQNKK (82 aa). A disordered region spans residues 423–505; sequence GNSLGSVSGD…AQNEKQLPPE (83 aa). Ser478 carries the post-translational modification Phosphoserine. The span at 491–500 shows a compositional bias: polar residues; that stretch reads QDGNSAQNEK. The tract at residues 505 to 688 is transcription activation domain; sequence EKSYRAAILK…EIDIEEGEID (184 aa). The stretch at 534-613 forms a coiled coil; that stretch reads TRDPEKLQRE…QSVELNENAK (80 aa). Positions 660-688 are disordered; the sequence is FMKQDEDEEEADPLTSPAPEIDIEEGEID.

In terms of assembly, interacts with BT1.

Its subcellular location is the nucleus. This Arabidopsis thaliana (Mouse-ear cress) protein is Transcription factor GTE9 (GTE9).